The chain runs to 352 residues: Holliday junction branch migration complex subunit RuvB (352 aa).

The segment at 13-201 (FSLRKKELRL…FGISQKIEFY (189 aa)) is large ATPase domain (RuvB-L). ATP is bound by residues Arg41, Gly82, Lys85, Thr86, Thr87, 148–150 (EDF), Arg191, Tyr201, and Arg238. Thr86 lines the Mg(2+) pocket. The segment at 202-273 (TCDELKQIID…LIKKALNSYQ (72 aa)) is small ATPAse domain (RuvB-S). Residues 276 to 352 (EKGLDYVDRQ…KYIDSKNDNF (77 aa)) form a head domain (RuvB-H) region. DNA is bound by residues Arg330 and Arg335.

This sequence belongs to the RuvB family. Homohexamer. Forms an RuvA(8)-RuvB(12)-Holliday junction (HJ) complex. HJ DNA is sandwiched between 2 RuvA tetramers; dsDNA enters through RuvA and exits via RuvB. An RuvB hexamer assembles on each DNA strand where it exits the tetramer. Each RuvB hexamer is contacted by two RuvA subunits (via domain III) on 2 adjacent RuvB subunits; this complex drives branch migration. In the full resolvosome a probable DNA-RuvA(4)-RuvB(12)-RuvC(2) complex forms which resolves the HJ.

It is found in the cytoplasm. It catalyses the reaction ATP + H2O = ADP + phosphate + H(+). Its function is as follows. The RuvA-RuvB-RuvC complex processes Holliday junction (HJ) DNA during genetic recombination and DNA repair, while the RuvA-RuvB complex plays an important role in the rescue of blocked DNA replication forks via replication fork reversal (RFR). RuvA specifically binds to HJ cruciform DNA, conferring on it an open structure. The RuvB hexamer acts as an ATP-dependent pump, pulling dsDNA into and through the RuvAB complex. RuvB forms 2 homohexamers on either side of HJ DNA bound by 1 or 2 RuvA tetramers; 4 subunits per hexamer contact DNA at a time. Coordinated motions by a converter formed by DNA-disengaged RuvB subunits stimulates ATP hydrolysis and nucleotide exchange. Immobilization of the converter enables RuvB to convert the ATP-contained energy into a lever motion, pulling 2 nucleotides of DNA out of the RuvA tetramer per ATP hydrolyzed, thus driving DNA branch migration. The RuvB motors rotate together with the DNA substrate, which together with the progressing nucleotide cycle form the mechanistic basis for DNA recombination by continuous HJ branch migration. Branch migration allows RuvC to scan DNA until it finds its consensus sequence, where it cleaves and resolves cruciform DNA. The chain is Holliday junction branch migration complex subunit RuvB from Prochlorococcus marinus (strain MIT 9312).